Here is a 620-residue protein sequence, read N- to C-terminus: Chaperone protein HscA homolog (620 aa).

This sequence belongs to the heat shock protein 70 family.

Chaperone involved in the maturation of iron-sulfur cluster-containing proteins. Has a low intrinsic ATPase activity which is markedly stimulated by HscB. This Janthinobacterium sp. (strain Marseille) (Minibacterium massiliensis) protein is Chaperone protein HscA homolog.